The following is a 203-amino-acid chain: Small ribosomal subunit protein uS4 (203 aa).

The S4 RNA-binding domain maps to Cys-93–Asn-154.

It belongs to the universal ribosomal protein uS4 family. As to quaternary structure, part of the 30S ribosomal subunit. Contacts protein S5. The interaction surface between S4 and S5 is involved in control of translational fidelity.

In terms of biological role, one of the primary rRNA binding proteins, it binds directly to 16S rRNA where it nucleates assembly of the body of the 30S subunit. With S5 and S12 plays an important role in translational accuracy. The polypeptide is Small ribosomal subunit protein uS4 (Chloroherpeton thalassium (strain ATCC 35110 / GB-78)).